We begin with the raw amino-acid sequence, 67 residues long: Small ribosomal subunit protein eS17 (67 aa).

Belongs to the eukaryotic ribosomal protein eS17 family. Part of the 30S ribosomal subunit.

This is Small ribosomal subunit protein eS17 from Pyrococcus furiosus (strain ATCC 43587 / DSM 3638 / JCM 8422 / Vc1).